The following is a 170-amino-acid chain: Adenine phosphoribosyltransferase (170 aa).

It belongs to the purine/pyrimidine phosphoribosyltransferase family. Homodimer.

It localises to the cytoplasm. The enzyme catalyses AMP + diphosphate = 5-phospho-alpha-D-ribose 1-diphosphate + adenine. Its pathway is purine metabolism; AMP biosynthesis via salvage pathway; AMP from adenine: step 1/1. In terms of biological role, catalyzes a salvage reaction resulting in the formation of AMP, that is energically less costly than de novo synthesis. This Alkaliphilus metalliredigens (strain QYMF) protein is Adenine phosphoribosyltransferase.